The primary structure comprises 645 residues: 1-deoxy-D-xylulose-5-phosphate synthase (645 aa).

Residues H83 and 124-126 (GHS) contribute to the thiamine diphosphate site. D155 lines the Mg(2+) pocket. Residues 156 to 157 (GS), N184, Y295, and E376 contribute to the thiamine diphosphate site. Position 184 (N184) interacts with Mg(2+).

It belongs to the transketolase family. DXPS subfamily. Homodimer. Mg(2+) serves as cofactor. It depends on thiamine diphosphate as a cofactor.

The enzyme catalyses D-glyceraldehyde 3-phosphate + pyruvate + H(+) = 1-deoxy-D-xylulose 5-phosphate + CO2. It participates in metabolic intermediate biosynthesis; 1-deoxy-D-xylulose 5-phosphate biosynthesis; 1-deoxy-D-xylulose 5-phosphate from D-glyceraldehyde 3-phosphate and pyruvate: step 1/1. Its function is as follows. Catalyzes the acyloin condensation reaction between C atoms 2 and 3 of pyruvate and glyceraldehyde 3-phosphate to yield 1-deoxy-D-xylulose-5-phosphate (DXP). This Desulfotalea psychrophila (strain LSv54 / DSM 12343) protein is 1-deoxy-D-xylulose-5-phosphate synthase.